The following is a 622-amino-acid chain: Pyranose 2-oxidase (622 aa).

Positions Met-1 to Thr-28 are cleaved as a signal peptide. Positions Ser-29–Gln-38 are excised as a propeptide. The residue at position 167 (His-167) is a Tele-8alpha-FAD histidine. The substrate site is built by Gln-448 and His-450. His-548 functions as the Proton acceptor in the catalytic mechanism. Asn-593 is an active-site residue.

Belongs to the GMC oxidoreductase family. Homotetramer. Requires FAD as cofactor.

The protein resides in the periplasm. The enzyme catalyses D-glucose + O2 = 2-dehydro-D-glucose + H2O2. Its function is as follows. Catalyzes the oxidation of various aldopyranoses and disaccharides on carbon-2 to the corresponding 2-keto sugars concomitant with the reduction of O(2) to H(2)O(2). Plays an important role in lignin degradation of wood rot fungi by supplying the essential cosubstrate H(2)O(2) for the ligninolytic peroxidases, lignin peroxidase and manganese-dependent peroxidase. The polypeptide is Pyranose 2-oxidase (p2ox) (Trametes pubescens (White-rot fungus)).